A 311-amino-acid chain; its full sequence is tRNA dimethylallyltransferase (311 aa).

12-19 (GPTASGKT) is a binding site for ATP. Residue 14–19 (TASGKT) participates in substrate binding. 3 interaction with substrate tRNA regions span residues 37-40 (DSAL), 161-165 (QRINR), and 241-246 (RCVGYR).

It belongs to the IPP transferase family. As to quaternary structure, monomer. Mg(2+) is required as a cofactor.

It catalyses the reaction adenosine(37) in tRNA + dimethylallyl diphosphate = N(6)-dimethylallyladenosine(37) in tRNA + diphosphate. In terms of biological role, catalyzes the transfer of a dimethylallyl group onto the adenine at position 37 in tRNAs that read codons beginning with uridine, leading to the formation of N6-(dimethylallyl)adenosine (i(6)A). The chain is tRNA dimethylallyltransferase from Histophilus somni (strain 129Pt) (Haemophilus somnus).